We begin with the raw amino-acid sequence, 269 residues long: Neurotrophic factor BDNF precursor form (269 aa).

Residues 1–18 (MTILFLTMVISYFSCMRA) form the signal peptide. Positions 19–150 (APLRDAPGMR…AANMSMRVRR (132 aa)) are excised as a propeptide. Disordered stretches follow at residues 39-61 (AATA…REEL) and 82-104 (AAHV…VATA). A glycan (N-linked (GlcNAc...) asparagine) is linked at N143. 3 disulfides stabilise this stretch: C163–C230, C208–C259, and C218–C261.

The protein belongs to the NGF-beta family.

Functionally, BDNF promotes the survival of neuronal populations that are all located either in the central nervous system or directly connected to it. The sequence is that of Neurotrophic factor BDNF precursor form (bdnf) from Xiphophorus maculatus (Southern platyfish).